The following is a 155-amino-acid chain: Superoxide dismutase [Cu-Zn] (155 aa).

Cu cation-binding residues include H47, H49, and H64. A disulfide bridge links C58 with C147. Residues H64, H72, H81, and D84 each coordinate Zn(2+). Cu cation is bound at residue H121. Residue R144 participates in substrate binding.

It belongs to the Cu-Zn superoxide dismutase family. As to quaternary structure, homodimer. Requires Cu cation as cofactor. It depends on Zn(2+) as a cofactor.

The protein resides in the cytoplasm. It carries out the reaction 2 superoxide + 2 H(+) = H2O2 + O2. Its function is as follows. Destroys radicals which are normally produced within the cells and which are toxic to biological systems. This chain is Superoxide dismutase [Cu-Zn] (SOD1), found in Kluyveromyces lactis (strain ATCC 8585 / CBS 2359 / DSM 70799 / NBRC 1267 / NRRL Y-1140 / WM37) (Yeast).